The sequence spans 301 residues: Ornithine carbamoyltransferase (301 aa).

Residues Arg-100 and 127 to 130 (HPCQ) contribute to the carbamoyl phosphate site. L-ornithine is bound by residues Asn-158, Asp-221, and 225 to 226 (SM). Carbamoyl phosphate-binding residues include Cys-260 and Arg-288.

It belongs to the aspartate/ornithine carbamoyltransferase superfamily. OTCase family. In terms of assembly, the enzyme is present as a mixture of trimers and dodecamers, with the relative proportions of the two forms depending on the salt concentration. In addition, the trimeric fraction could reassociate into dodecamers when the salt concentration is increased. It appears that in vivo, the main fraction is in the dodecameric form.

Its subcellular location is the cytoplasm. The catalysed reaction is carbamoyl phosphate + L-ornithine = L-citrulline + phosphate + H(+). It participates in amino-acid biosynthesis; L-arginine biosynthesis; L-arginine from L-ornithine and carbamoyl phosphate: step 1/3. Its activity is regulated as follows. Inhibited by excess of arginine and by the bisubstrate delta-N-phosphonoacetyl-L-ornithine (PALO). Its function is as follows. Reversibly catalyzes the transfer of the carbamoyl group from carbamoyl phosphate (CP) to the N(epsilon) atom of ornithine (ORN) to produce L-citrulline, which is a substrate for argininosuccinate synthetase, the enzyme involved in the final step in arginine biosynthesis. The chain is Ornithine carbamoyltransferase from Moritella abyssi.